A 479-amino-acid chain; its full sequence is Serine--tRNA ligase, mitochondrial (479 aa).

The N-terminal 42 residues, 1–42 (MRLTNRRFSTFLGNALPSKKKGFIFMSQLLYLRTFSTHTSYL), are a transit peptide targeting the mitochondrion. 287-289 (TAE) serves as a coordination point for L-serine. 317–319 (RRE) contacts ATP. An L-serine-binding site is contributed by Glu-340. Residue 404-407 (EITS) participates in ATP binding. Thr-438 provides a ligand contact to L-serine.

Belongs to the class-II aminoacyl-tRNA synthetase family. Type-1 seryl-tRNA synthetase subfamily. Homodimer. The tRNA molecule probably binds across the dimer.

It is found in the mitochondrion matrix. The enzyme catalyses tRNA(Ser) + L-serine + ATP = L-seryl-tRNA(Ser) + AMP + diphosphate + H(+). Catalyzes the attachment of serine to tRNA(Ser). Is also probably able to aminoacylate tRNA(Sec) with serine, to form the misacylated tRNA L-seryl-tRNA(Sec), which will be further converted into selenocysteinyl-tRNA(Sec). The polypeptide is Serine--tRNA ligase, mitochondrial (dia4) (Schizosaccharomyces pombe (strain 972 / ATCC 24843) (Fission yeast)).